Reading from the N-terminus, the 210-residue chain is Adenylate kinase (210 aa).

10-15 lines the ATP pocket; that stretch reads GSGKGT. The NMP stretch occupies residues 30 to 54; it reads SCGDILRKQNKCCDINKLIKKGELI. Residues Arg-36, 52–54, 80–83, and Gln-87 contribute to the AMP site; these read ELI and GFPR. Residues 117-154 form an LID region; sequence GRIIDKVSGEIYHLKFNPPKFITEKSNKNKILVRRLDD. Residues Arg-118 and 127 to 128 contribute to the ATP site; that span reads IY. Arg-151 and Arg-162 together coordinate AMP. Phe-195 provides a ligand contact to ATP.

The protein belongs to the adenylate kinase family. In terms of assembly, monomer.

The protein resides in the cytoplasm. It carries out the reaction AMP + ATP = 2 ADP. It functions in the pathway purine metabolism; AMP biosynthesis via salvage pathway; AMP from ADP: step 1/1. Catalyzes the reversible transfer of the terminal phosphate group between ATP and AMP. Plays an important role in cellular energy homeostasis and in adenine nucleotide metabolism. This chain is Adenylate kinase, found in Wigglesworthia glossinidia brevipalpis.